The following is a 364-amino-acid chain: Long-wave-sensitive opsin 1 (364 aa).

Residues 1 to 52 (MTQRWGPQRLAGGQPHAGLEDSTRASIFTYTNSNATRGPFEGPNYHIAPRWV) are Extracellular-facing. Residue serine 22 is glycosylated (O-linked (GlcNAc) serine). An N-linked (GlcNAc...) asparagine glycan is attached at asparagine 34. Residues 53 to 77 (YHVTSAWMIFVVIASVFTNGLVLAA) traverse the membrane as a helical segment. At 78–89 (TMKFKKLRHPLN) the chain is on the cytoplasmic side. The helical transmembrane segment at 90 to 115 (WILVNLAVADLAETIIASTISVVNQI) threads the bilayer. Residues 116–129 (YGYFVLGHPMCVLE) are Extracellular-facing. A disulfide bridge connects residues cysteine 126 and cysteine 203. A helical transmembrane segment spans residues 130-149 (GYTVSLCGITGLWSLAIISW). The Cytoplasmic portion of the chain corresponds to 150 to 168 (ERWLVVCKPFGNVRFDAKL). A helical transmembrane segment spans residues 169–192 (AIAGIAFSWIWAAVWTAPPIFGWS). Residues 193-218 (RYWPHGLKTSCGPDVFSGSSYPGVQS) are Extracellular-facing. Residues 219 to 246 (YMIVLMITCCIIPLSVIVLCYLQVWLAI) form a helical membrane-spanning segment. The Cytoplasmic portion of the chain corresponds to 247–268 (RAVAKQQKESESTQKAEKEVTR). The helical transmembrane segment at 269–292 (MVMVMIFAYCVCWGPYTFFACFAA) threads the bilayer. The Extracellular segment spans residues 293–300 (AHPGYAFH). The chain crosses the membrane as a helical span at residues 301–325 (PLVAALPAYFAKSATIYNPIIYVFM). N6-(retinylidene)lysine is present on lysine 312. Residues 326–364 (NRQFRNCIMQLFGKKVDDGSELSSASRTEASSVSSVSPA) lie on the Cytoplasmic side of the membrane.

It belongs to the G-protein coupled receptor 1 family. Opsin subfamily. In terms of processing, phosphorylated on some or all of the serine and threonine residues present in the C-terminal region. In terms of tissue distribution, the three color pigments are found in the cone photoreceptor cells. Expressed in retina.

It localises to the membrane. Its function is as follows. Visual pigments are the light-absorbing molecules that mediate vision. They consist of an apoprotein, opsin, covalently linked to cis-retinal. The polypeptide is Long-wave-sensitive opsin 1 (OPN1LW) (Felis catus (Cat)).